We begin with the raw amino-acid sequence, 334 residues long: DNA polymerase III subunit delta' (334 aa).

In terms of assembly, the DNA polymerase III holoenzyme complex contains at least 10 different subunits organized into 3 functionally essential subassemblies: the Pol III core, the beta sliding clamp processivity factor and the clamp-loading complex. The Pol III core (subunits alpha, epsilon and theta) contains the polymerase and the 3'-5' exonuclease proofreading activities. The polymerase is tethered to the template via the dimeric beta sliding clamp processivity factor. The clamp-loading complex (also called gamma complex) assembles the beta sliding clamp onto the primed template and plays a central role in the organization and communication at the replication fork. The clamp-loading complex contains delta, delta', psi and chi, and 3 copies of either or both of two different DnaX proteins, gamma and tau. The DNA replisome complex has a single clamp loader (3 tau and 1 each of delta, delta', psi and chi subunits) which binds 3 Pol III cores (1 core on the leading strand and 2 on the lagging strand) each with a beta sliding clamp dimer. Additional proteins in the replisome are other copies of gamma, psi and chi, Ssb, DNA helicase and RNA primase. The clamp loader hydrolyzes ATP to assemble the beta processivity factor onto the primed template and plays a central role in the organization and communication at the replication fork; the minimal complex to load the beta sliding clamp on DNA is delta, delta', gamma.

The catalysed reaction is DNA(n) + a 2'-deoxyribonucleoside 5'-triphosphate = DNA(n+1) + diphosphate. Its function is as follows. Part of the beta sliding clamp loading complex, which hydrolyzes ATP to load the beta clamp onto primed DNA to form the DNA replication pre-initiation complex. DNA polymerase III is a complex, multichain enzyme responsible for most of the replicative synthesis in bacteria. This DNA polymerase also exhibits 3' to 5' exonuclease activity. The gamma complex (gamma(3),delta,delta') is thought to load beta dimers onto DNA by binding ATP which alters the complex's conformation so it can bind beta sliding clamp dimers and open them at one interface. Primed DNA is recognized, ATP is hydrolyzed releasing the gamma complex and closing the beta sliding clamp ring around the primed DNA. This Escherichia coli (strain K12) protein is DNA polymerase III subunit delta' (holB).